Consider the following 252-residue polypeptide: Indole-3-glycerol phosphate synthase (252 aa).

It belongs to the TrpC family.

It carries out the reaction 1-(2-carboxyphenylamino)-1-deoxy-D-ribulose 5-phosphate + H(+) = (1S,2R)-1-C-(indol-3-yl)glycerol 3-phosphate + CO2 + H2O. It functions in the pathway amino-acid biosynthesis; L-tryptophan biosynthesis; L-tryptophan from chorismate: step 4/5. The sequence is that of Indole-3-glycerol phosphate synthase from Leptospira interrogans serogroup Icterohaemorrhagiae serovar copenhageni (strain Fiocruz L1-130).